The following is a 727-amino-acid chain: NADH-ubiquinone oxidoreductase 75 kDa subunit, mitochondrial (727 aa).

The transit peptide at 1 to 23 (MLRIPVKRALIGLSKSPKGYVRS) directs the protein to the mitochondrion. The 2Fe-2S ferredoxin-type domain maps to 30-108 (NLIEVFVDGQ…GWNILTNSEK (79 aa)). [2Fe-2S] cluster-binding residues include C64, C75, and C78. K84 carries the post-translational modification N6-acetyllysine. [2Fe-2S] cluster is bound at residue C92. One can recognise a 4Fe-4S His(Cys)3-ligated-type domain in the interval 108–147 (KSKKAREGVMEFLLANHPLDCPICDQGGECDLQDQSMMFG). H124, C128, C131, C137, C176, C179, C182, and C226 together coordinate [4Fe-4S] cluster. In terms of domain architecture, 4Fe-4S Mo/W bis-MGD-type spans 245–301 (TRKTESIDVMDAVGSNIVVSTRTGEVMRILPRMHEDINEEWISDKTRFAYDGLKRQR). 2 positions are modified to N6-acetyllysine: K499 and K709.

It belongs to the complex I 75 kDa subunit family. Core subunit of respiratory chain NADH dehydrogenase (Complex I) which is composed of 45 different subunits. This is the largest subunit of complex I and it is a component of the iron-sulfur (IP) fragment of the enzyme. Complex I associates with ubiquinol-cytochrome reductase complex (Complex III) to form supercomplexes. Interacts with MDM2 and AKAP1. [2Fe-2S] cluster is required as a cofactor. The cofactor is [4Fe-4S] cluster.

It is found in the mitochondrion inner membrane. The catalysed reaction is a ubiquinone + NADH + 5 H(+)(in) = a ubiquinol + NAD(+) + 4 H(+)(out). Functionally, core subunit of the mitochondrial membrane respiratory chain NADH dehydrogenase (Complex I) which catalyzes electron transfer from NADH through the respiratory chain, using ubiquinone as an electron acceptor. Essential for catalysing the entry and efficient transfer of electrons within complex I. Plays a key role in the assembly and stability of complex I and participates in the association of complex I with ubiquinol-cytochrome reductase complex (Complex III) to form supercomplexes. The chain is NADH-ubiquinone oxidoreductase 75 kDa subunit, mitochondrial (Ndufs1) from Rattus norvegicus (Rat).